The sequence spans 75 residues: Small ribosomal subunit protein bS18c (75 aa).

This sequence belongs to the bacterial ribosomal protein bS18 family. As to quaternary structure, part of the 30S ribosomal subunit.

The protein resides in the plastid. Its subcellular location is the chloroplast. In Marchantia polymorpha (Common liverwort), this protein is Small ribosomal subunit protein bS18c (rps18).